Consider the following 362-residue polypeptide: Zinc phosphodiesterase ELAC protein 1 (362 aa).

Residues histidine 62, histidine 64, aspartate 66, histidine 67, histidine 181, aspartate 252, and histidine 312 each contribute to the Zn(2+) site. Aspartate 66 serves as the catalytic Proton acceptor.

It belongs to the RNase Z family. In terms of assembly, homodimer. Zn(2+) serves as cofactor.

The protein resides in the cytoplasm. It is found in the cytosol. The protein localises to the nucleus. The enzyme catalyses Endonucleolytic cleavage of RNA, removing extra 3' nucleotides from tRNA precursor, generating 3' termini of tRNAs. A 3'-hydroxy group is left at the tRNA terminus and a 5'-phosphoryl group is left at the trailer molecule.. Functionally, zinc phosphodiesterase, which displays some tRNA 3'-processing endonuclease activity. Specifically involved in tRNA repair: acts downstream of the ribosome-associated quality control (RQC) pathway by removing a 2',3'-cyclic phosphate from tRNAs following cleavage by ANKZF1. tRNAs are then processed by TRNT1. The sequence is that of Zinc phosphodiesterase ELAC protein 1 (Elac1) from Mus musculus (Mouse).